The chain runs to 112 residues: Photosystem II reaction center Psb28 protein (112 aa).

Belongs to the Psb28 family. Part of the photosystem II complex.

It localises to the cellular thylakoid membrane. This chain is Photosystem II reaction center Psb28 protein, found in Synechocystis sp. (strain ATCC 27184 / PCC 6803 / Kazusa).